The sequence spans 64 residues: Prokaryotic ubiquitin-like protein Pup (64 aa).

Basic and acidic residues-rich tracts occupy residues 1 to 11 and 25 to 34; these read MAQEQTKRTGG and GQERREKLAE. The segment at 1–38 is disordered; it reads MAQEQTKRTGGGDEDEGSAGPEAAGQERREKLAEDTDD. The tract at residues 21–58 is ARC ATPase binding; it reads PEAAGQERREKLAEDTDDLLDEIDDVLEENAEDFVRAY. The stretch at 24–52 forms a coiled coil; sequence AGQERREKLAEDTDDLLDEIDDVLEENAE. A Deamidated glutamine modification is found at Q64. Residue Q64 forms an Isoglutamyl lysine isopeptide (Gln-Lys) (interchain with K-? in acceptor proteins) linkage.

Belongs to the prokaryotic ubiquitin-like protein family. In terms of assembly, strongly interacts with the proteasome-associated ATPase ARC through a hydrophobic interface; the interacting region of Pup lies in its C-terminal half. There is one Pup binding site per ARC hexamer ring. In terms of processing, is modified by deamidation of its C-terminal glutamine to glutamate by the deamidase Dop, a prerequisite to the subsequent pupylation process.

Its pathway is protein degradation; proteasomal Pup-dependent pathway. In terms of biological role, protein modifier that is covalently attached to lysine residues of substrate proteins, thereby targeting them for proteasomal degradation. The tagging system is termed pupylation. This Nocardia farcinica (strain IFM 10152) protein is Prokaryotic ubiquitin-like protein Pup.